A 192-amino-acid chain; its full sequence is Protein Syd (192 aa).

The protein belongs to the Syd family.

Its subcellular location is the cell inner membrane. In terms of biological role, interacts with the SecY protein in vivo. May bind preferentially to an uncomplexed state of SecY, thus functioning either as a chelating agent for excess SecY in the cell or as a regulatory factor that negatively controls the translocase function. The protein is Protein Syd of Hahella chejuensis (strain KCTC 2396).